Reading from the N-terminus, the 508-residue chain is Probable glycine dehydrogenase (decarboxylating) subunit 2 (508 aa).

Lys-277 carries the post-translational modification N6-(pyridoxal phosphate)lysine.

This sequence belongs to the GcvP family. C-terminal subunit subfamily. As to quaternary structure, the glycine cleavage system is composed of four proteins: P, T, L and H. In this organism, the P 'protein' is a heterodimer of two subunits. Pyridoxal 5'-phosphate is required as a cofactor.

It catalyses the reaction N(6)-[(R)-lipoyl]-L-lysyl-[glycine-cleavage complex H protein] + glycine + H(+) = N(6)-[(R)-S(8)-aminomethyldihydrolipoyl]-L-lysyl-[glycine-cleavage complex H protein] + CO2. Functionally, the glycine cleavage system catalyzes the degradation of glycine. The P protein binds the alpha-amino group of glycine through its pyridoxal phosphate cofactor; CO(2) is released and the remaining methylamine moiety is then transferred to the lipoamide cofactor of the H protein. This chain is Probable glycine dehydrogenase (decarboxylating) subunit 2, found in Saccharolobus solfataricus (strain ATCC 35092 / DSM 1617 / JCM 11322 / P2) (Sulfolobus solfataricus).